A 326-amino-acid chain; its full sequence is MRPELALVPGEPAGIGPELCVRLVQQPREDCRLLAFADPDTLRAAAAALNLPLQLLPEDAEARVPGDLRVRAVPNAVPSHFGHADPANAGAVIGALLGAGQACLSGELHGVVTGPVHKAVINEGGIAYSGTTELLADQAGVKVVMMLANHIVRVALATTHLPLRDVADAITAPGLEHTLRTVHAALRREFGLAAPRIAVLGLNPHAGEDGHLGREELDLVIPLLQRLRAEGMDLVGPLPADTAFLPAKLAGFDTVLAMYHDQGLPVLKYSGFEQAVNLTLGLPYPRVAVDHGTALDLAGRGIADPSSLQAATTLCAQLARQRTLSA.

Thr-132 contacts substrate. Residues His-160, His-205, and His-260 each coordinate a divalent metal cation. The substrate site is built by Lys-268, Asn-277, and Arg-286.

Belongs to the PdxA family. Homodimer. It depends on Zn(2+) as a cofactor. Requires Mg(2+) as cofactor. The cofactor is Co(2+).

The protein localises to the cytoplasm. The enzyme catalyses 4-(phosphooxy)-L-threonine + NAD(+) = 3-amino-2-oxopropyl phosphate + CO2 + NADH. It functions in the pathway cofactor biosynthesis; pyridoxine 5'-phosphate biosynthesis; pyridoxine 5'-phosphate from D-erythrose 4-phosphate: step 4/5. Catalyzes the NAD(P)-dependent oxidation of 4-(phosphooxy)-L-threonine (HTP) into 2-amino-3-oxo-4-(phosphooxy)butyric acid which spontaneously decarboxylates to form 3-amino-2-oxopropyl phosphate (AHAP). The protein is 4-hydroxythreonine-4-phosphate dehydrogenase of Stenotrophomonas maltophilia (strain R551-3).